We begin with the raw amino-acid sequence, 125 residues long: Barwin (125 aa).

Glutamine 1 bears the Pyrrolidone carboxylic acid mark. Positions 1 to 125 (QQANDVRATY…VNYQFVDCRD (125 aa)) constitute a Barwin domain. Cystine bridges form between cysteine 31–cysteine 63, cysteine 52–cysteine 86, and cysteine 66–cysteine 123.

Functionally, may be involved in a defense mechanism. Probable plant lectin. Binds weakly a chitin analog. The polypeptide is Barwin (Hordeum vulgare (Barley)).